The chain runs to 151 residues: 3-hydroxyacyl-[acyl-carrier-protein] dehydratase FabZ (151 aa).

The active site involves His54.

The protein belongs to the thioester dehydratase family. FabZ subfamily. Oligomer. The N-terminus is blocked.

Its subcellular location is the cytoplasm. The catalysed reaction is a (3R)-hydroxyacyl-[ACP] = a (2E)-enoyl-[ACP] + H2O. Its function is as follows. Involved in unsaturated fatty acids biosynthesis. Catalyzes the dehydration of short chain beta-hydroxyacyl-ACPs and long chain saturated and unsaturated beta-hydroxyacyl-ACPs. The chain is 3-hydroxyacyl-[acyl-carrier-protein] dehydratase FabZ from Escherichia coli O9:H4 (strain HS).